The sequence spans 330 residues: Ribosomal RNA small subunit methyltransferase H (330 aa).

S-adenosyl-L-methionine contacts are provided by residues G51–H53, D70, D118, and Q125. A disordered region spans residues S276 to P330. Low complexity predominate over residues A311–L321.

The protein belongs to the methyltransferase superfamily. RsmH family.

It is found in the cytoplasm. The catalysed reaction is cytidine(1402) in 16S rRNA + S-adenosyl-L-methionine = N(4)-methylcytidine(1402) in 16S rRNA + S-adenosyl-L-homocysteine + H(+). Specifically methylates the N4 position of cytidine in position 1402 (C1402) of 16S rRNA. This chain is Ribosomal RNA small subunit methyltransferase H, found in Thermobifida fusca (strain YX).